We begin with the raw amino-acid sequence, 439 residues long: Tol-Pal system protein TolB (439 aa).

The N-terminal stretch at 1 to 22 is a signal peptide; the sequence is MTKFPRWLAILVGLLFPLSALT.

This sequence belongs to the TolB family. The Tol-Pal system is composed of five core proteins: the inner membrane proteins TolA, TolQ and TolR, the periplasmic protein TolB and the outer membrane protein Pal. They form a network linking the inner and outer membranes and the peptidoglycan layer.

The protein resides in the periplasm. Part of the Tol-Pal system, which plays a role in outer membrane invagination during cell division and is important for maintaining outer membrane integrity. The sequence is that of Tol-Pal system protein TolB from Xylella fastidiosa (strain M12).